We begin with the raw amino-acid sequence, 642 residues long: Threonine--tRNA ligase (642 aa).

The TGS domain occupies 1–61; that stretch reads MPVITLPDGS…ENDAQLSIIT (61 aa). The segment at 243-534 is catalytic; the sequence is DHRKIGKQLD…LTEEFAGFFP (292 aa). Lysine 286 is subject to N6-acetyllysine. Residues cysteine 334, histidine 385, and histidine 511 each coordinate Zn(2+).

Belongs to the class-II aminoacyl-tRNA synthetase family. Homodimer. It depends on Zn(2+) as a cofactor.

It localises to the cytoplasm. The enzyme catalyses tRNA(Thr) + L-threonine + ATP = L-threonyl-tRNA(Thr) + AMP + diphosphate + H(+). Catalyzes the attachment of threonine to tRNA(Thr) in a two-step reaction: L-threonine is first activated by ATP to form Thr-AMP and then transferred to the acceptor end of tRNA(Thr). Also edits incorrectly charged L-seryl-tRNA(Thr). The sequence is that of Threonine--tRNA ligase from Shigella flexneri serotype 5b (strain 8401).